The chain runs to 193 residues: DNA damage-inducible transcript 4-like protein (193 aa).

The protein belongs to the DDIT4 family. In terms of tissue distribution, expressed in heart, skeletal muscle and testis.

It localises to the cytoplasm. In terms of biological role, inhibits cell growth by regulating the TOR signaling pathway upstream of the TSC1-TSC2 complex and downstream of AKT1. In Rattus norvegicus (Rat), this protein is DNA damage-inducible transcript 4-like protein (Ddit4l).